The chain runs to 68 residues: ATP synthase F(0) complex subunit 8 (68 aa).

The chain crosses the membrane as a helical span at residues 8 to 24 (VWPTTITPMLLTLFLIT). K54 carries the N6-acetyllysine; alternate modification. K54 carries the post-translational modification N6-succinyllysine; alternate. K57 carries the N6-acetyllysine modification.

Belongs to the ATPase protein 8 family. As to quaternary structure, component of the ATP synthase complex composed at least of ATP5F1A/subunit alpha, ATP5F1B/subunit beta, ATP5MC1/subunit c (homooctomer), MT-ATP6/subunit a, MT-ATP8/subunit 8, ATP5ME/subunit e, ATP5MF/subunit f, ATP5MG/subunit g, ATP5MK/subunit k, ATP5MJ/subunit j, ATP5F1C/subunit gamma, ATP5F1D/subunit delta, ATP5F1E/subunit epsilon, ATP5PF/subunit F6, ATP5PB/subunit b, ATP5PD/subunit d, ATP5PO/subunit OSCP. ATP synthase complex consists of a soluble F(1) head domain (subunits alpha(3) and beta(3)) - the catalytic core - and a membrane F(0) domain - the membrane proton channel (subunits c, a, 8, e, f, g, k and j). These two domains are linked by a central stalk (subunits gamma, delta, and epsilon) rotating inside the F1 region and a stationary peripheral stalk (subunits F6, b, d, and OSCP). Interacts with PRICKLE3.

The protein localises to the mitochondrion membrane. Subunit 8, of the mitochondrial membrane ATP synthase complex (F(1)F(0) ATP synthase or Complex V) that produces ATP from ADP in the presence of a proton gradient across the membrane which is generated by electron transport complexes of the respiratory chain. ATP synthase complex consist of a soluble F(1) head domain - the catalytic core - and a membrane F(1) domain - the membrane proton channel. These two domains are linked by a central stalk rotating inside the F(1) region and a stationary peripheral stalk. During catalysis, ATP synthesis in the catalytic domain of F(1) is coupled via a rotary mechanism of the central stalk subunits to proton translocation. In vivo, can only synthesize ATP although its ATP hydrolase activity can be activated artificially in vitro. Part of the complex F(0) domain. This Pan paniscus (Pygmy chimpanzee) protein is ATP synthase F(0) complex subunit 8.